Consider the following 321-residue polypeptide: Malate dehydrogenase (321 aa).

Residues glycine 10–glycine 15 and aspartate 34 each bind NAD(+). The substrate site is built by arginine 83 and arginine 89. Residues asparagine 96 and valine 119–asparagine 121 each bind NAD(+). Substrate is bound by residues asparagine 121 and arginine 152. Histidine 176 serves as the catalytic Proton acceptor.

This sequence belongs to the LDH/MDH superfamily. MDH type 3 family.

The catalysed reaction is (S)-malate + NAD(+) = oxaloacetate + NADH + H(+). Its function is as follows. Catalyzes the reversible oxidation of malate to oxaloacetate. The chain is Malate dehydrogenase from Azorhizobium caulinodans (strain ATCC 43989 / DSM 5975 / JCM 20966 / LMG 6465 / NBRC 14845 / NCIMB 13405 / ORS 571).